The primary structure comprises 224 residues: PKHD-type hydroxylase tll1907 (224 aa).

A Fe2OG dioxygenase domain is found at 77 to 176 (KIIGPLLFSR…RLVAVAWVQS (100 aa)). Fe cation-binding residues include H96, D98, and H157. R167 provides a ligand contact to 2-oxoglutarate.

The cofactor is Fe(2+). It depends on L-ascorbate as a cofactor.

The polypeptide is PKHD-type hydroxylase tll1907 (Thermosynechococcus vestitus (strain NIES-2133 / IAM M-273 / BP-1)).